Here is a 385-residue protein sequence, read N- to C-terminus: Succinate--CoA ligase [ADP-forming] subunit beta (385 aa).

Positions 9 to 244 constitute an ATP-grasp domain; sequence KALFRTFGVP…LDEEDPLEVE (236 aa). Residues Lys46, 53 to 55, Glu99, Gln102, and Glu107 contribute to the ATP site; that span reads GRG. The Mg(2+) site is built by Asn199 and Asp213. Substrate-binding positions include Asn264 and 321–323; that span reads GIL.

It belongs to the succinate/malate CoA ligase beta subunit family. In terms of assembly, heterotetramer of two alpha and two beta subunits. The cofactor is Mg(2+).

The catalysed reaction is succinate + ATP + CoA = succinyl-CoA + ADP + phosphate. It carries out the reaction GTP + succinate + CoA = succinyl-CoA + GDP + phosphate. Its pathway is carbohydrate metabolism; tricarboxylic acid cycle; succinate from succinyl-CoA (ligase route): step 1/1. Succinyl-CoA synthetase functions in the citric acid cycle (TCA), coupling the hydrolysis of succinyl-CoA to the synthesis of either ATP or GTP and thus represents the only step of substrate-level phosphorylation in the TCA. The beta subunit provides nucleotide specificity of the enzyme and binds the substrate succinate, while the binding sites for coenzyme A and phosphate are found in the alpha subunit. The chain is Succinate--CoA ligase [ADP-forming] subunit beta from Desulforapulum autotrophicum (strain ATCC 43914 / DSM 3382 / VKM B-1955 / HRM2) (Desulfobacterium autotrophicum).